The chain runs to 171 residues: O-acetyl-ADP-ribose deacetylase 2 (171 aa).

The Macro domain occupies 1–171; it reads MNKITVIQGD…NYDLYLKLLN (171 aa). Substrate is bound by residues 10 to 11, asparagine 24, 32 to 34, and 121 to 125; these read DI, GVD, and STGIY. Aspartate 34 (proton acceptor) is an active-site residue.

Belongs to the MacroD-type family. YmdB subfamily. In terms of assembly, homodimer. Interacts with RNase III.

It catalyses the reaction 3''-O-acetyl-ADP-D-ribose + H2O = ADP-D-ribose + acetate + H(+). The catalysed reaction is 2''-O-acetyl-ADP-D-ribose + H2O = ADP-D-ribose + acetate + H(+). In terms of biological role, deacetylates O-acetyl-ADP ribose to yield ADP-ribose and free acetate. Down-regulates ribonuclease 3 (RNase III) activity. Acts by interacting directly with the region of the ribonuclease that is required for dimerization/activation. This is O-acetyl-ADP-ribose deacetylase 2 from Pantoea vagans (strain C9-1) (Pantoea agglomerans (strain C9-1)).